A 967-amino-acid polypeptide reads, in one-letter code: MANKMEKMASIDAQLRQLAPAKVSEDDKLIEYDALLLDRFLDILQDLHGEDLKDSVQEVYELSAEYERKHDPKKLEELGKLITGLDAGDSIVVAKSFSHMLNLANLAEEVQIAHRRRNKLKKGDFRDESNATTESDIEETLKKLVFNMKKSPQEVFDALKNQTVDLVLTAHPTQSVRRSLLQKHARVRNCLSQLYAKDITPDDKQELDESLQREIQAAFRTDEIKRTPPTPQDEMRAGMSYFHETIWKGVPKFLRRVDTALKNIGINERVPYNAPLIQFSSWMGGDRDGNPRVTPEVTRDVCLLARMMAANLYYSQIEDLMFELSMWRCNDELRDRAEELHRNSKKDEVAKHYIEFWKKVPLNEPYRVILGHVRDKLYRTRERSRYLLAHGYSDIPEEDTFTNFDEFLEPLELCYRSLCFCGDRAIADGSLLDFLRQVSTFGLSLVRLDIRQESDRHTDVMDAITKHLEIGSYQEWSEEKRQEWLLSELVGKRPLFGPDLPTTDEIRDVLDTFHVIAELPSDNFGAYIISMATAPSDVLAVELLQRECKIKNPLRVVPLFEKLADLEAAPAALARLFSIDWYRNRIDGKQEVMIGYSDSGKDAGRFSAAWQLYKAQEELINVAQKFSVKLTMFHGRGGTVGRGGGPTHLAILSQPPDTIHGSLRVTVQGEVIEQSFGEEHLCFRTLQRFTAATLEHGMRPPSSPKPEWRALMDQMAIIATEEYRSIVFKEPRFVEYFRLATPEMEYGRMNIGSRPAKRRPSGGIETLRAIPWIFPWTQTRFHLPVWLGFGSAFKQVIEKDVKNLHMLQDMYNQWPFFRVTIDLVEMVFAKGDPGIAALNDRLLVSQNLWPFGEQLRNKYEETKKLLLQVATHKEVLEGDPYLKQRLRLRDSYITTLNVFQAYTLKRIRDPKSSVNASRLPLSRESPEATKPADELVTLNPTSEYAPGLEDTLILTMKGIAAGMQNTG.

Ser-10 is subject to Phosphoserine. Catalysis depends on residues His-171 and Lys-601. Residues 915-936 (NASRLPLSRESPEATKPADELV) are disordered. Over residues 924–933 (ESPEATKPAD) the composition is skewed to basic and acidic residues.

Belongs to the PEPCase type 1 family. In terms of assembly, homotetramer. The cofactor is Mg(2+).

The protein localises to the cytoplasm. It carries out the reaction oxaloacetate + phosphate = phosphoenolpyruvate + hydrogencarbonate. By light-reversible phosphorylation. Functionally, through the carboxylation of phosphoenolpyruvate (PEP) it forms oxaloacetate, a four-carbon dicarboxylic acid source for the tricarboxylic acid cycle. In Pisum sativum (Garden pea), this protein is Phosphoenolpyruvate carboxylase.